The following is a 214-amino-acid chain: Outer-membrane lipoprotein LolB (214 aa).

The first 25 residues, 1-25, serve as a signal peptide directing secretion; it reads MNNLKRLTKTIFSCFTLSALLLLAG. Cysteine 26 carries the N-palmitoyl cysteine lipid modification. A lipid anchor (S-diacylglycerol cysteine) is attached at cysteine 26. Residues 143-160 show a composition bias toward polar residues; it reads QVIESDSQGKPKQLTNTQ. The tract at residues 143–163 is disordered; sequence QVIESDSQGKPKQLTNTQTPP.

Belongs to the LolB family. As to quaternary structure, monomer.

The protein localises to the cell outer membrane. Plays a critical role in the incorporation of lipoproteins in the outer membrane after they are released by the LolA protein. This is Outer-membrane lipoprotein LolB from Shewanella baltica (strain OS223).